Consider the following 213-residue polypeptide: Probable transaldolase (213 aa).

Lysine 83 (schiff-base intermediate with substrate) is an active-site residue.

The protein belongs to the transaldolase family. Type 3B subfamily.

It localises to the cytoplasm. It carries out the reaction D-sedoheptulose 7-phosphate + D-glyceraldehyde 3-phosphate = D-erythrose 4-phosphate + beta-D-fructose 6-phosphate. It participates in carbohydrate degradation; pentose phosphate pathway; D-glyceraldehyde 3-phosphate and beta-D-fructose 6-phosphate from D-ribose 5-phosphate and D-xylulose 5-phosphate (non-oxidative stage): step 2/3. Functionally, transaldolase is important for the balance of metabolites in the pentose-phosphate pathway. This Geobacillus thermodenitrificans (strain NG80-2) protein is Probable transaldolase.